A 170-amino-acid polypeptide reads, in one-letter code: MKLSFSLCIFFLISADIVQGTCKKVAQRSPNVNYDFCVKSLGADPKSHSADLQGLGVISANLAIQQGSKIQTFIGRILKSKVDPALKKYLNDCVGLYADAKSSVQEAIADFKSKDYASANVKMSAALDDSVTCEDGFKEKKGIASPVTKENKDYVQLTAISLAITKLLGA.

The first 14 residues, 1 to 14, serve as a signal peptide directing secretion; that stretch reads MKLSFSLCIFFLIS. 2 disulfide bridges follow: Cys-22–Cys-37 and Cys-93–Cys-133.

It belongs to the PMEI family. As to expression, expressed in pollen (at protein level). Expressed in pollen.

This is Putative invertase inhibitor from Platanus orientalis (Oriental plane-tree).